The sequence spans 399 residues: MLFLGAGELGKEVAIELMRLGAWVCAADSYAGAPAQQVAHEYRALDMANAAELQALFDEIKPDIIVPEVEAIATDVLAGTAAAGAQVVPSAEIAAICMDRERLRVLAHEELGLPTTPYRFAGSLEELRAGASEVGYPCVVKPVMSSSGHGQSVVRSADAIDAAWTEAQEGRRAADEGDVSRVIVEALAPLERELTVLTVSSSAGIVTCAPIGQRQESGDYRESWQPATEPDGEAERARDIARTAVEGLVAKAQAAGETGWGVFGVELFVLTDGSILFNEVSPRPHDTGMVTMASQRLSEFALHARAILGLPITPEHVSLTIPAGSVAASHAIVVAGDGEVEFTDVAAALAEPGTDLRIFAKPEVHGHRRMAVALAVGESEADARAKAGLVADALTITVE.

N(1)-(5-phospho-beta-D-ribosyl)glycinamide is bound by residues Glu8–Leu9 and Glu68. ATP is bound by residues Arg100, Lys141, Ser146 to Gln151, Glu185 to Ala188, and Glu193. An ATP-grasp domain is found at Val105–Leu308. Glu266 and Glu279 together coordinate Mg(2+). Residues Asp286, Lys361, and Arg368–Arg369 contribute to the N(1)-(5-phospho-beta-D-ribosyl)glycinamide site.

The protein belongs to the PurK/PurT family. As to quaternary structure, homodimer.

It carries out the reaction N(1)-(5-phospho-beta-D-ribosyl)glycinamide + formate + ATP = N(2)-formyl-N(1)-(5-phospho-beta-D-ribosyl)glycinamide + ADP + phosphate + H(+). It functions in the pathway purine metabolism; IMP biosynthesis via de novo pathway; N(2)-formyl-N(1)-(5-phospho-D-ribosyl)glycinamide from N(1)-(5-phospho-D-ribosyl)glycinamide (formate route): step 1/1. Involved in the de novo purine biosynthesis. Catalyzes the transfer of formate to 5-phospho-ribosyl-glycinamide (GAR), producing 5-phospho-ribosyl-N-formylglycinamide (FGAR). Formate is provided by PurU via hydrolysis of 10-formyl-tetrahydrofolate. The polypeptide is Formate-dependent phosphoribosylglycinamide formyltransferase (Bifidobacterium longum (strain NCC 2705)).